Here is a 655-residue protein sequence, read N- to C-terminus: MSSSNVEVFIPVSQGNTNGFPATASNDLKAFTEGAVLSFHNICYRVKLKSGFLPCRKPVEKEILSNINGIMKPGLNAILGPTGGGKSSLLDVLAARKDPSGLSGDVLINGAPRPANFKCNSGYVVQDDVVMGTLTVRENLQFSAALRLATTMTNHEKNERINRVIQELGLDKVADSKVGTQFIRGVSGGERKRTSIGMELITDPSILFLDEPTTGLDSSTANAVLLLLKRMSKQGRTIIFSIHQPRYSIFKLFDSLTLLASGRLMFHGPAQEALGYFESAGYHCEAYNNPADFFLDIINGDSTAVALNREEDFKATEIIEPSKQDKPLIEKLAEIYVNSSFYKETKAELHQLSGGEKKKKITVFKEISYTTSFCHQLRWVSKRSFKNLLGNPQASIAQIIVTVVLGLVIGAIYFGLKNDSTGIQNRAGVLFFLTTNQCFSSVSAVELFVVEKKLFIHEYISGYYRVSSYFLGKLLSDLLPMRMLPSIIFTCIVYFMLGLKPKADAFFVMMFTLMMVAYSASSMALAIAAGQSVVSVATLLMTICFVFMMIFSGLLVNLTTIASWLSWLQYFSIPRYGFTALQHNEFLGQNFCPGLNATGNNPCNYATCTGEEYLVKQGIDLSPWGLWKNHVALACMIVIFLTIAYLKLLFLKKYS.

Over 1–395 the chain is Cytoplasmic; it reads MSSSNVEVFI…KNLLGNPQAS (395 aa). The ABC transporter domain maps to 37–286; the sequence is LSFHNICYRV…FESAGYHCEA (250 aa). ATP contacts are provided by residues 80-87, 184-190, glutamate 211, and histidine 243; these read GPTGGGKS and RGVSGGE. Position 362 is a phosphothreonine; by PIM1 (threonine 362). Residues 389 to 651 enclose the ABC transmembrane type-2 domain; that stretch reads LGNPQASIAQ…TIAYLKLLFL (263 aa). A helical membrane pass occupies residues 396-416; sequence IAQIIVTVVLGLVIGAIYFGL. The Extracellular segment spans residues 417–428; it reads KNDSTGIQNRAG. The chain crosses the membrane as a helical span at residues 429-449; that stretch reads VLFFLTTNQCFSSVSAVELFV. At 450–477 the chain is on the cytoplasmic side; the sequence is VEKKLFIHEYISGYYRVSSYFLGKLLSD. A helical membrane pass occupies residues 478–498; that stretch reads LLPMRMLPSIIFTCIVYFMLG. Residues 499–506 lie on the Extracellular side of the membrane; sequence LKPKADAF. Residues 507 to 527 form a helical membrane-spanning segment; it reads FVMMFTLMMVAYSASSMALAI. At 528-535 the chain is on the cytoplasmic side; the sequence is AAGQSVVS. The chain crosses the membrane as a helical span at residues 536–556; that stretch reads VATLLMTICFVFMMIFSGLLV. The Extracellular segment spans residues 557–630; it reads NLTTIASWLS…LSPWGLWKNH (74 aa). Cysteine 592 and cysteine 608 are oxidised to a cystine. Asparagine 596 carries N-linked (GlcNAc...) asparagine glycosylation. A helical membrane pass occupies residues 631 to 651; sequence VALACMIVIFLTIAYLKLLFL. The Cytoplasmic segment spans residues 652 to 655; the sequence is KKYS.

Belongs to the ABC transporter superfamily. ABCG family. Eye pigment precursor importer (TC 3.A.1.204) subfamily. Homodimer; disulfide-linked. The minimal functional unit is a homodimer, but the major oligomeric form in plasma membrane is a homotetramer with possibility of higher order oligomerization up to homododecamers. In terms of processing, N-glycosylated. Glycosylation-deficient ABCG2 is normally expressed and functional. Phosphorylated. Phosphorylation at Thr-362 by PIM1 is induced by drugs like mitoxantrone and is associated with cells increased drug resistance. It regulates the localization to the plasma membrane, the homooligomerization and therefore, the activity of the transporter. In terms of tissue distribution, highly expressed in placenta. Low expression in small intestine, liver and colon. Expressed in brain (at protein level).

It localises to the cell membrane. Its subcellular location is the apical cell membrane. It is found in the mitochondrion membrane. It catalyses the reaction ATP + H2O + xenobioticSide 1 = ADP + phosphate + xenobioticSide 2.. The enzyme catalyses urate(in) + ATP + H2O = urate(out) + ADP + phosphate + H(+). It carries out the reaction indoxyl sulfate(in) + ATP + H2O = indoxyl sulfate(out) + ADP + phosphate + H(+). The catalysed reaction is sphing-4-enine 1-phosphate(in) + ATP + H2O = sphing-4-enine 1-phosphate(out) + ADP + phosphate + H(+). It catalyses the reaction estrone 3-sulfate(in) + ATP + H2O = estrone 3-sulfate(out) + ADP + phosphate + H(+). The enzyme catalyses dehydroepiandrosterone 3-sulfate(in) + ATP + H2O = dehydroepiandrosterone 3-sulfate(out) + ADP + phosphate + H(+). It carries out the reaction 4-methylumbelliferone sulfate(in) + ATP + H2O = 4-methylumbelliferone sulfate(out) + ADP + phosphate + H(+). The catalysed reaction is 5,7-dimethyl-2-methylamino-4-(3-pyridylmethyl)-1,3-benzothiazol-6-yl beta-D-glucuronate(in) + ATP + H2O = 5,7-dimethyl-2-methylamino-4-(3-pyridylmethyl)-1,3-benzothiazol-6-yl beta-D-glucuronate(out) + ADP + phosphate + H(+). It catalyses the reaction 4-methylumbelliferone beta-D-glucuronate(in) + ATP + H2O = 4-methylumbelliferone beta-D-glucuronate(out) + ADP + phosphate + H(+). The enzyme catalyses 5,7-dimethyl-2-methylamino-4-(3-pyridylmethyl)-1,3-benzothiazol-6-yl sulfate(in) + ATP + H2O = 5,7-dimethyl-2-methylamino-4-(3-pyridylmethyl)-1,3-benzothiazol-6-yl sulfate(out) + ADP + phosphate + H(+). It carries out the reaction 17beta-estradiol 17-O-(beta-D-glucuronate)(in) + ATP + H2O = 17beta-estradiol 17-O-(beta-D-glucuronate)(out) + ADP + phosphate + H(+). The catalysed reaction is methotrexate(in) + ATP + H2O = methotrexate(out) + ADP + phosphate + H(+). It catalyses the reaction riboflavin(in) + ATP + H2O = riboflavin(out) + ADP + phosphate + H(+). The enzyme catalyses pheophorbide a(in) + ATP + H2O = pheophorbide a(out) + ADP + phosphate + H(+). It carries out the reaction itaconate(in) + ATP + H2O = itaconate(out) + ADP + phosphate + H(+). With respect to regulation, specifically inhibited by the fungal toxin fumitremorgin C and Ko143. Its function is as follows. Broad substrate specificity ATP-dependent transporter of the ATP-binding cassette (ABC) family that actively extrudes a wide variety of physiological compounds, dietary toxins and xenobiotics from cells. Involved in porphyrin homeostasis, mediating the export of protoporphyrin IX (PPIX) from both mitochondria to cytosol and cytosol to extracellular space, it also functions in the cellular export of heme. Also mediates the efflux of sphingosine-1-P from cells. Acts as a urate exporter functioning in both renal and extrarenal urate excretion. In kidney, it also functions as a physiological exporter of the uremic toxin indoxyl sulfate. Also involved in the excretion of steroids like estrone 3-sulfate/E1S, 3beta-sulfooxy-androst-5-en-17-one/DHEAS, and other sulfate conjugates. Mediates the secretion of the riboflavin and biotin vitamins into milk. Extrudes pheophorbide a, a phototoxic porphyrin catabolite of chlorophyll, reducing its bioavailability. Plays an important role in the exclusion of xenobiotics from the brain. It confers to cells a resistance to multiple drugs and other xenobiotics including mitoxantrone, pheophorbide, camptothecin, methotrexate, azidothymidine, and the anthracyclines daunorubicin and doxorubicin, through the control of their efflux. In placenta, it limits the penetration of drugs from the maternal plasma into the fetus. May play a role in early stem cell self-renewal by blocking differentiation. In inflammatory macrophages, exports itaconate from the cytosol to the extracellular compartment and limits the activation of TFEB-dependent lysosome biogenesis involved in antibacterial innate immune response. In Homo sapiens (Human), this protein is Broad substrate specificity ATP-binding cassette transporter ABCG2 (ABCG2).